Here is a 257-residue protein sequence, read N- to C-terminus: Ribonuclease HII (257 aa).

An RNase H type-2 domain is found at 72-257 (TYIAGIDEVG…FAPIKDMIQK (186 aa)). A divalent metal cation is bound by residues aspartate 78, glutamate 79, and aspartate 170.

The protein belongs to the RNase HII family. Mn(2+) is required as a cofactor. Mg(2+) serves as cofactor.

The protein localises to the cytoplasm. The catalysed reaction is Endonucleolytic cleavage to 5'-phosphomonoester.. In terms of biological role, endonuclease that specifically degrades the RNA of RNA-DNA hybrids. The polypeptide is Ribonuclease HII (Bacillus cereus (strain ZK / E33L)).